Reading from the N-terminus, the 499-residue chain is Aspartyl/glutamyl-tRNA(Asn/Gln) amidotransferase subunit B (499 aa).

It belongs to the GatB/GatE family. GatB subfamily. Heterotrimer of A, B and C subunits.

The catalysed reaction is L-glutamyl-tRNA(Gln) + L-glutamine + ATP + H2O = L-glutaminyl-tRNA(Gln) + L-glutamate + ADP + phosphate + H(+). It catalyses the reaction L-aspartyl-tRNA(Asn) + L-glutamine + ATP + H2O = L-asparaginyl-tRNA(Asn) + L-glutamate + ADP + phosphate + 2 H(+). Allows the formation of correctly charged Asn-tRNA(Asn) or Gln-tRNA(Gln) through the transamidation of misacylated Asp-tRNA(Asn) or Glu-tRNA(Gln) in organisms which lack either or both of asparaginyl-tRNA or glutaminyl-tRNA synthetases. The reaction takes place in the presence of glutamine and ATP through an activated phospho-Asp-tRNA(Asn) or phospho-Glu-tRNA(Gln). This Bifidobacterium longum (strain DJO10A) protein is Aspartyl/glutamyl-tRNA(Asn/Gln) amidotransferase subunit B.